Reading from the N-terminus, the 732-residue chain is Zinc/cadmium/lead-transporting P-type ATPase (732 aa).

The Cytoplasmic segment spans residues 1-124 (MSTPDNHGKK…QAADEPQASR (124 aa)). Residues 48 to 112 (TRYSWKVSGM…AVQKAGYSLR (65 aa)) form the HMA domain. 3 residues coordinate Zn(2+): Asp58, Cys59, and Cys62. A helical membrane pass occupies residues 125–145 (LKENLPLITLIVMMAISWGLE). A topological domain (periplasmic) is located at residue Gln146. The helical transmembrane segment at 147–167 (FNHPFGQLAFIATTLVGLYPI) threads the bilayer. The Cytoplasmic portion of the chain corresponds to 168–179 (ARQALRLIKSGS). Residues 180 to 197 (YFAIETLMSVAAIGALFI) form a helical membrane-spanning segment. Topologically, residues 198 to 202 (GATAE) are periplasmic. Residues 203–222 (AAMVLLLFLIGERLEGWAAS) form a helical membrane-spanning segment. The Cytoplasmic portion of the chain corresponds to 223–356 (RARQGVSALM…IDRFSRIYTP (134 aa)). A helical transmembrane segment spans residues 357–377 (AIMAVALLVTLVPPLLFAASW). Residues 378 to 383 (QEWIYK) lie on the Periplasmic side of the membrane. The helical transmembrane segment at 384 to 404 (GLTLLLIGCPCALVISTPAAI) threads the bilayer. Residues Cys392 and Cys394 each contribute to the Zn(2+) site. The Cytoplasmic segment spans residues 405-685 (TSGLAAAARR…RATHANIRQN (281 aa)). Catalysis depends on Asp436, which acts as the 4-aspartylphosphate intermediate. Mg(2+) is bound by residues Asp436, Thr438, and Asp628. A helical transmembrane segment spans residues 686–702 (ITIALGLKGIFLVTTLL). The Periplasmic portion of the chain corresponds to 703 to 707 (GMTGL). A helical transmembrane segment spans residues 708–729 (WLAVLADTGATVLVTANALRLL). Asp714 lines the Zn(2+) pocket. Over 730–732 (RRR) the chain is Cytoplasmic.

The protein belongs to the cation transport ATPase (P-type) (TC 3.A.3) family. Type IB subfamily.

It localises to the cell inner membrane. It catalyses the reaction Pb(2+)(in) + ATP + H2O = Pb(2+)(out) + ADP + phosphate + H(+). The enzyme catalyses Zn(2+)(in) + ATP + H2O = Zn(2+)(out) + ADP + phosphate + H(+). The catalysed reaction is Cd(2+)(in) + ATP + H2O = Cd(2+)(out) + ADP + phosphate + H(+). Functionally, confers resistance to zinc, cadmium and lead. Couples the hydrolysis of ATP with the export of zinc, cadmium or lead. In Shigella sonnei (strain Ss046), this protein is Zinc/cadmium/lead-transporting P-type ATPase.